Reading from the N-terminus, the 309-residue chain is Thiamine-monophosphate kinase (309 aa).

Mg(2+) is bound by residues Asp41 and Asp55. His62 is a binding site for substrate. Asp83, Asp128, and Asp215 together coordinate Mg(2+). 127-128 (GD) is an ATP binding site. Ser217 is a binding site for ATP. Asp218 provides a ligand contact to Mg(2+). Glu268 contacts substrate.

It belongs to the thiamine-monophosphate kinase family.

It carries out the reaction thiamine phosphate + ATP = thiamine diphosphate + ADP. It participates in cofactor biosynthesis; thiamine diphosphate biosynthesis; thiamine diphosphate from thiamine phosphate: step 1/1. Functionally, catalyzes the ATP-dependent phosphorylation of thiamine-monophosphate (TMP) to form thiamine-pyrophosphate (TPP), the active form of vitamin B1. The protein is Thiamine-monophosphate kinase of Methanopyrus kandleri (strain AV19 / DSM 6324 / JCM 9639 / NBRC 100938).